We begin with the raw amino-acid sequence, 178 residues long: Interleukin-10 (178 aa).

A signal peptide spans 1 to 18 (MHSSALLCCLVLLTGVRA). 2 cysteine pairs are disulfide-bonded: cysteine 30–cysteine 126 and cysteine 80–cysteine 132. The N-linked (GlcNAc...) asparagine glycan is linked to asparagine 134.

This sequence belongs to the IL-10 family. In terms of assembly, homodimer. Interacts with IL10RA and IL10RB. As to expression, produced by a variety of cell lines, including T-cells, macrophages, mast cells and other cell types.

It localises to the secreted. Functionally, major immune regulatory cytokine that acts on many cells of the immune system where it has profound anti-inflammatory functions, limiting excessive tissue disruption caused by inflammation. Mechanistically, IL10 binds to its heterotetrameric receptor comprising IL10RA and IL10RB leading to JAK1 and STAT2-mediated phosphorylation of STAT3. In turn, STAT3 translocates to the nucleus where it drives expression of anti-inflammatory mediators. Targets antigen-presenting cells (APCs) such as macrophages and monocytes and inhibits their release of pro-inflammatory cytokines including granulocyte-macrophage colony-stimulating factor /GM-CSF, granulocyte colony-stimulating factor/G-CSF, IL-1 alpha, IL-1 beta, IL-6, IL-8 and TNF-alpha. Also interferes with antigen presentation by reducing the expression of MHC-class II and co-stimulatory molecules, thereby inhibiting their ability to induce T cell activation. In addition, controls the inflammatory response of macrophages by reprogramming essential metabolic pathways including mTOR signaling. This is Interleukin-10 (IL10) from Homo sapiens (Human).